We begin with the raw amino-acid sequence, 693 residues long: Protein-glutamine gamma-glutamyltransferase E (693 aa).

Position 111 is a phosphotyrosine (Tyr111). Thr112 is modified (phosphothreonine). 4 residues coordinate Ca(2+): Ala222, Asn225, Asn227, and Asp228. Residue Cys273 is part of the active site. The Ca(2+) site is built by Asp302, Asp304, Asn306, Ser308, and Asp325. Active-site residues include His331 and Asp354. The Ca(2+) site is built by Asn394, Thr416, Glu444, and Glu449. Residues 455–482 (KAMNKLKPNASFGATSSRGPQGEEKEPS) are disordered.

Belongs to the transglutaminase superfamily. Transglutaminase family. Consists of two polypeptide chains, which are synthesized as a precursor form of a single polypeptide. It depends on Ca(2+) as a cofactor. Activated by proteolytic processing. In vitro activation is commonly achieved by cleavage with dispase, a neutral bacterial protease. Physiological activation may be catalyzed by CTSL and, to a lesser extent, by CTSS.

It is found in the cytoplasm. It catalyses the reaction L-glutaminyl-[protein] + L-lysyl-[protein] = [protein]-L-lysyl-N(6)-5-L-glutamyl-[protein] + NH4(+). In terms of biological role, catalyzes the calcium-dependent formation of isopeptide cross-links between glutamine and lysine residues in various proteins, as well as the conjugation of polyamines to proteins. Involved in the formation of the cornified envelope (CE), a specialized component consisting of covalent cross-links of proteins beneath the plasma membrane of terminally differentiated keratinocytes. Catalyzes small proline-rich proteins and LOR cross-linking to form small interchain oligomers, which are further cross-linked by TGM1 onto the growing CE scaffold. In hair follicles, involved in cross-linking structural proteins to hardening the inner root sheath. This chain is Protein-glutamine gamma-glutamyltransferase E (Tgm3), found in Rattus norvegicus (Rat).